The sequence spans 248 residues: uncharacterized protein (248 aa).

Isoleucine 9–valine 33 is a binding site for NADP(+). Position 141 (serine 141) interacts with substrate. Tyrosine 154 acts as the Proton acceptor in catalysis.

The protein belongs to the short-chain dehydrogenases/reductases (SDR) family.

This is an uncharacterized protein from Listeria monocytogenes serovar 1/2a (strain ATCC BAA-679 / EGD-e).